The following is a 175-amino-acid chain: Acireductone dioxygenase (175 aa).

4 residues coordinate Fe(2+): His81, His83, Glu87, and His126. The Ni(2+) site is built by His81, His83, Glu87, and His126.

This sequence belongs to the acireductone dioxygenase (ARD) family. It depends on Fe(2+) as a cofactor. Requires Ni(2+) as cofactor.

The protein resides in the cytoplasm. It is found in the nucleus. The catalysed reaction is 1,2-dihydroxy-5-(methylsulfanyl)pent-1-en-3-one + O2 = 4-methylsulfanyl-2-oxobutanoate + formate + 2 H(+). It catalyses the reaction 1,2-dihydroxy-5-(methylsulfanyl)pent-1-en-3-one + O2 = 3-(methylsulfanyl)propanoate + CO + formate + 2 H(+). Its pathway is amino-acid biosynthesis; L-methionine biosynthesis via salvage pathway; L-methionine from S-methyl-5-thio-alpha-D-ribose 1-phosphate: step 5/6. Its function is as follows. Catalyzes 2 different reactions between oxygen and the acireductone 1,2-dihydroxy-3-keto-5-methylthiopentene (DHK-MTPene) depending upon the metal bound in the active site. Fe-containing acireductone dioxygenase (Fe-ARD) produces formate and 2-keto-4-methylthiobutyrate (KMTB), the alpha-ketoacid precursor of methionine in the methionine recycle pathway. Ni-containing acireductone dioxygenase (Ni-ARD) produces methylthiopropionate, carbon monoxide and formate, and does not lie on the methionine recycle pathway. The sequence is that of Acireductone dioxygenase from Phaeosphaeria nodorum (strain SN15 / ATCC MYA-4574 / FGSC 10173) (Glume blotch fungus).